The following is a 76-amino-acid chain: MPHIDVKHFPRNLSEEEKKVIAEDLAAVLKKHFGSSDDSLSVAFNEIQPDRWKDEVYDPIIKPHLDTLAKKPGYSY.

The active-site Proton acceptor; via imino nitrogen is P2.

It belongs to the 4-oxalocrotonate tautomerase family. PptA subfamily. In terms of assembly, homodimer.

It localises to the cytoplasm. This is Tautomerase PptA from Pectobacterium carotovorum subsp. carotovorum (strain PC1).